A 371-amino-acid chain; its full sequence is Jasmonate-induced oxygenase 2 (371 aa).

The Fe2OG dioxygenase domain maps to 219–320 (NIGACLRVNY…RVSLAFFYNP (102 aa)). Arg225 is a binding site for jasmonate. Asn227 and Tyr229 together coordinate 2-oxoglutarate. His244, Asp246, and His301 together coordinate Fe cation. Arg311 and Ser313 together coordinate 2-oxoglutarate. Residues Arg350 and Arg354 each coordinate jasmonate.

Belongs to the iron/ascorbate-dependent oxidoreductase family. L-ascorbate is required as a cofactor. It depends on Fe(2+) as a cofactor.

The catalysed reaction is jasmonate + 2-oxoglutarate + O2 = (1R,2R)-12-hydroxyjasmonate + succinate + CO2. Functionally, 2-oxoglutarate-dependent dioxygenase involved in the oxidation of jasmonate (JA), a stress-induced phytohormone synthesized in response to attack by pathogens and herbivores, which triggers the activation of defense responses via the JA-mediated signaling pathway. Converts JA to 12-hydroxyjasmonate (12OH-JA), an inactive form of JA. Is specific to free JA, and cannot oxidize the bioactive form jasmonoyl-L-isoleucine (JA-Ile) or other JA-amino acid conjugates. Prevents over-accumulation of JA and indirectly its bioactive form JA-Ile under stress response. Acts as a negative regulator of JA-mediated defense signaling, by contributing to 12OH-JA accumulation, which represses JA defense responses upon infection by the fungal pathogen Botrytis cinerea. Acts as a negative regulator of JA-mediated defense responses upon infestation by the herbivorous caterpillar Mamestra brassicae. May be involved in the catabolism of cytotoxic polycyclic aromatic hydrocarbons (PAHs). The sequence is that of Jasmonate-induced oxygenase 2 from Arabidopsis thaliana (Mouse-ear cress).